A 678-amino-acid polypeptide reads, in one-letter code: Protein hook (678 aa).

The interval 1-155 is interaction with microtubules; the sequence is MSTQNGMYYS…NIMRALQELE (155 aa). The Calponin-homology (CH) domain maps to 5–123; sequence NGMYYSLLEW…RLLQLVLGCA (119 aa). Coiled coils occupy residues 135-435 and 479-589; these read EIMC…LKCG and QTAL…AKEV.

This sequence belongs to the hook family. As to quaternary structure, homodimer. Interacts with microtubules via its N-terminus.

It is found in the cytoplasm. It localises to the cytoskeleton. The protein localises to the endosome. Its subcellular location is the synapse. In terms of biological role, involved in endocytic trafficking by stabilizing organelles of the endocytic pathway. Probably acts as a cytoskeletal linker protein required to tether endosome vesicles to the cytoskeleton. Involved in modulation of endocytosis at stages required for down-regulation of membrane proteins that control synapse size. Not involved in synaptic vesicle recycling. Required in R7 cells for boss endocytosis into multivesicular bodies (MVBs). Has a role in regulating adult longevity. This chain is Protein hook, found in Drosophila virilis (Fruit fly).